Consider the following 352-residue polypeptide: Phenylalanine--tRNA ligase alpha subunit (352 aa).

Residue Glu-258 participates in Mg(2+) binding.

It belongs to the class-II aminoacyl-tRNA synthetase family. Phe-tRNA synthetase alpha subunit type 1 subfamily. As to quaternary structure, tetramer of two alpha and two beta subunits. Mg(2+) is required as a cofactor.

It localises to the cytoplasm. It catalyses the reaction tRNA(Phe) + L-phenylalanine + ATP = L-phenylalanyl-tRNA(Phe) + AMP + diphosphate + H(+). The chain is Phenylalanine--tRNA ligase alpha subunit from Staphylococcus carnosus (strain TM300).